The chain runs to 129 residues: Small ribosomal subunit protein uS8 (129 aa).

It belongs to the universal ribosomal protein uS8 family. As to quaternary structure, part of the 30S ribosomal subunit.

One of the primary rRNA binding proteins, it binds directly to 16S rRNA central domain where it helps coordinate assembly of the platform of the 30S subunit. The chain is Small ribosomal subunit protein uS8 from Nanoarchaeum equitans (strain Kin4-M).